The following is a 363-amino-acid chain: UDP-N-acetylenolpyruvoylglucosamine reductase (363 aa).

The FAD-binding PCMH-type domain occupies 27–197 (LGGWATRVVT…LSVDFRLARS (171 aa)). The active site involves Arg175. The Proton donor role is filled by Ser252. The active site involves Glu355.

The protein belongs to the MurB family. FAD serves as cofactor.

The protein localises to the cytoplasm. The catalysed reaction is UDP-N-acetyl-alpha-D-muramate + NADP(+) = UDP-N-acetyl-3-O-(1-carboxyvinyl)-alpha-D-glucosamine + NADPH + H(+). Its pathway is cell wall biogenesis; peptidoglycan biosynthesis. Functionally, cell wall formation. The polypeptide is UDP-N-acetylenolpyruvoylglucosamine reductase (Salinispora arenicola (strain CNS-205)).